The sequence spans 90 residues: Conotoxin ba9a (90 aa).

The N-terminal stretch at 1–27 (MHLSLARSAGLMWLLLFAVGNFVGVQP) is a signal peptide. Residues 28 to 62 (GQITRDVDNGQLADNRRNLQSLRKPMTLFKSLNKR) constitute a propeptide that is removed on maturation. Glu-67 carries the 4-carboxyglutamate modification. Pro-76 and Pro-80 each carry 4-hydroxyproline.

Expressed by the venom duct.

The protein resides in the secreted. This chain is Conotoxin ba9a, found in Conus bayani (Bayan's cone).